The primary structure comprises 129 residues: NADH-ubiquinone oxidoreductase chain 3 (129 aa).

The next 3 membrane-spanning stretches (helical) occupy residues 4-24 (FYMY…WLLA), 48-68 (AAFS…DLEI), and 82-102 (GLYG…AFIL).

This sequence belongs to the complex I subunit 3 family.

Its subcellular location is the mitochondrion membrane. It catalyses the reaction a ubiquinone + NADH + 5 H(+)(in) = a ubiquinol + NAD(+) + 4 H(+)(out). In terms of biological role, core subunit of the mitochondrial membrane respiratory chain NADH dehydrogenase (Complex I) that is believed to belong to the minimal assembly required for catalysis. Complex I functions in the transfer of electrons from NADH to the respiratory chain. The immediate electron acceptor for the enzyme is believed to be ubiquinone. In Candida albicans (strain SC5314 / ATCC MYA-2876) (Yeast), this protein is NADH-ubiquinone oxidoreductase chain 3 (NAD3).